The primary structure comprises 128 residues: Small ribosomal subunit protein eS8 (128 aa).

The protein belongs to the eukaryotic ribosomal protein eS8 family. Part of the 30S ribosomal subunit.

The chain is Small ribosomal subunit protein eS8 from Methanococcus maripaludis (strain DSM 14266 / JCM 13030 / NBRC 101832 / S2 / LL).